The following is a 234-amino-acid chain: Demethylmenaquinone methyltransferase (234 aa).

S-adenosyl-L-methionine is bound by residues Thr58, Asp79, and 104-105 (NA).

The protein belongs to the class I-like SAM-binding methyltransferase superfamily. MenG/UbiE family.

The catalysed reaction is a 2-demethylmenaquinol + S-adenosyl-L-methionine = a menaquinol + S-adenosyl-L-homocysteine + H(+). It participates in quinol/quinone metabolism; menaquinone biosynthesis; menaquinol from 1,4-dihydroxy-2-naphthoate: step 2/2. In terms of biological role, methyltransferase required for the conversion of demethylmenaquinol (DMKH2) to menaquinol (MKH2). This chain is Demethylmenaquinone methyltransferase, found in Lysinibacillus sphaericus (strain C3-41).